Here is a 390-residue protein sequence, read N- to C-terminus: Sorting nexin C1711.11 (390 aa).

The 123-residue stretch at methionine 1–serine 123 folds into the PX domain. Residues arginine 44, lysine 70, and arginine 89 each coordinate a 1,2-diacyl-sn-glycero-3-phospho-(1D-myo-inositol-3-phosphate).

It belongs to the sorting nexin family.

It localises to the cytoplasm. It is found in the membrane. This chain is Sorting nexin C1711.11, found in Schizosaccharomyces pombe (strain 972 / ATCC 24843) (Fission yeast).